Here is a 594-residue protein sequence, read N- to C-terminus: Shugoshin (594 aa).

Residues 38–61 (KITDMETKVSELVQENVSLRSRLS) adopt a coiled-coil conformation. Disordered regions lie at residues 104–178 (SGIH…KSSR), 201–266 (QLPI…TNKN), 342–380 (SKIKHSMKHPRTKLKGGQDDIMPHTDYDKDDEKRERRTR), and 519–549 (TKQQAIENNSSDPNVSDENENSNVKPTRTKQ). Positions 220–240 (EEESQENKHTKEEREDEGKEN) form a coiled coil. Residues 224 to 239 (QENKHTKEEREDEGKE) show a composition bias toward basic and acidic residues. Residues 252–261 (SVTNTGTECS) show a composition bias toward polar residues. A compositionally biased stretch (basic residues) spans 343-355 (KIKHSMKHPRTKL). Residues 357 to 376 (GGQDDIMPHTDYDKDDEKRE) are compositionally biased toward basic and acidic residues. 2 stretches are compositionally biased toward polar residues: residues 519–532 (TKQQAIENNSSDPN) and 539–549 (NSNVKPTRTKQ).

This sequence belongs to the shugoshin family.

The protein resides in the nucleus. It localises to the chromosome. The protein localises to the centromere. Plays a central role in chromosome cohesion during cell division by preventing premature dissociation of cohesin complex from centromeres after prophase, when most of cohesin complex dissociates from chromosomes arms. This chain is Shugoshin (SGO1), found in Kluyveromyces lactis (strain ATCC 8585 / CBS 2359 / DSM 70799 / NBRC 1267 / NRRL Y-1140 / WM37) (Yeast).